The chain runs to 124 residues: Fluoride-specific ion channel FluC (124 aa).

The next 4 helical transmembrane spans lie at 3–23, 34–54, 68–88, and 100–120; these read VLLIFLGCGAGGVARYGVSNL, IGTLIVNITGSLLMGILFIFI, LLLIGFLGGYTTFSSFSIETF, and ALNVLLSVALCIAGAWLGVLI. Residues glycine 75 and threonine 78 each coordinate Na(+).

It belongs to the fluoride channel Fluc/FEX (TC 1.A.43) family.

It localises to the cell inner membrane. It carries out the reaction fluoride(in) = fluoride(out). With respect to regulation, na(+) is not transported, but it plays an essential structural role and its presence is essential for fluoride channel function. In terms of biological role, fluoride-specific ion channel. Important for reducing fluoride concentration in the cell, thus reducing its toxicity. In Coxiella burnetii (strain Dugway 5J108-111), this protein is Fluoride-specific ion channel FluC.